The sequence spans 130 residues: S-protein homolog 30 (130 aa).

2 N-linked (GlcNAc...) asparagine glycosylation sites follow: N64 and N77.

The protein belongs to the plant self-incompatibility (S1) protein family.

The protein resides in the secreted. This Arabidopsis thaliana (Mouse-ear cress) protein is S-protein homolog 30.